The following is a 503-amino-acid chain: ATP synthase subunit alpha (503 aa).

170 to 177 (GDRQTGKT) provides a ligand contact to ATP.

The protein belongs to the ATPase alpha/beta chains family. In terms of assembly, F-type ATPases have 2 components, CF(1) - the catalytic core - and CF(0) - the membrane proton channel. CF(1) has five subunits: alpha(3), beta(3), gamma(1), delta(1), epsilon(1). CF(0) has three main subunits: a(1), b(2) and c(9-12). The alpha and beta chains form an alternating ring which encloses part of the gamma chain. CF(1) is attached to CF(0) by a central stalk formed by the gamma and epsilon chains, while a peripheral stalk is formed by the delta and b chains.

Its subcellular location is the cell inner membrane. It carries out the reaction ATP + H2O + 4 H(+)(in) = ADP + phosphate + 5 H(+)(out). Functionally, produces ATP from ADP in the presence of a proton gradient across the membrane. The alpha chain is a regulatory subunit. This Pseudothermotoga lettingae (strain ATCC BAA-301 / DSM 14385 / NBRC 107922 / TMO) (Thermotoga lettingae) protein is ATP synthase subunit alpha.